We begin with the raw amino-acid sequence, 578 residues long: Nuclear receptor subfamily 1 group D member 2 (578 aa).

Positions Met-1–Val-60 are required for phosphorylation by CSNK1E and cytoplasmic localization. Residues Met-1–Met-99 are modulating. Residues Ser-13 to Ser-47 are compositionally biased toward low complexity. A disordered region spans residues Ser-13–Ser-89. The residue at position 46 (Ser-46) is a Phosphoserine; by GSK3-beta. Residues Asn-48 to Ser-61 are compositionally biased toward polar residues. Residues Val-100–Phe-176 constitute a DNA-binding region (nuclear receptor). 2 NR C4-type zinc fingers span residues Cys-103–Cys-123 and Cys-140–Cys-164. An N6-acetyllysine; by KAT5 mark is found at Lys-162 and Lys-163. Residues Glu-214–Phe-247 form a disordered region. Residues Leu-227 to Asn-237 show a composition bias toward basic and acidic residues. 2 disulfide bridges follow: Cys-336–Cys-342 and Cys-373–Cys-383. The 211-residue stretch at Arg-368 to Pro-578 folds into the NR LBD domain. Positions 383 and 567 each coordinate heme. The interaction with ZNHIT1 stretch occupies residues Ser-396–Pro-578.

It belongs to the nuclear hormone receptor family. NR1 subfamily. As to quaternary structure, binds DNA as a monomer or a homodimer. Interacts with NCOA5 coactivator, leading to a strong increase of transcription of target genes. Interacts (via N-terminus) with KAT5. Interacts (via C-terminus) with HDAC1. Interacts with ZNHIT1. Interacts with SIAH2. Deacetylated by HDAC1. Acetylation and deacetylation regulate its transcriptional regulatory activity. Post-translationally, under more reducing intracellular redox conditions, Cys-383 is in its heme-bound state, which is optimal for recruitment of the NCOR1/HDAC3 corepressor complex and repression of target genes. When subjected to oxidative stress conditions, Cys-383 undergoes oxidation to form a disulfide bridge with Cys-373, also triggering a ligand switch that results in release of bound heme and derepression of target genes. In terms of processing, ubiquitinated by SIAH2; leading to its proteasomal degradation. Phosphorylated by CSNK1E; phosphorylation enhances its cytoplasmic localization.

The protein localises to the nucleus. The protein resides in the cytoplasm. The heme-bound form can bind gaseous signaling molecules such as CO and nitric oxide (NO) and NO can reverse its transcriptional repressor activity. In terms of biological role, transcriptional repressor which coordinates circadian rhythm and metabolic pathways in a heme-dependent manner. Integral component of the complex transcription machinery that governs circadian rhythmicity and forms a critical negative limb of the circadian clock by directly repressing the expression of core clock components BMAL1 and CLOCK. Also regulates genes involved in metabolic functions, including lipid metabolism and the inflammatory response. Acts as a receptor for heme which stimulates its interaction with the NCOR1/HDAC3 corepressor complex, enhancing transcriptional repression. Recognizes two classes of DNA response elements within the promoter of its target genes and can bind to DNA as either monomers or homodimers, depending on the nature of the response element. Binds as a monomer to a response element composed of the consensus half-site motif 5'-[A/G]GGTCA-3' preceded by an A/T-rich 5' sequence (RevRE), or as a homodimer to a direct repeat of the core motif spaced by two nuclegotides (RevDR-2). Acts as a potent competitive repressor of ROR alpha (RORA) function and also negatively regulates the expression of NR1D1. Regulates lipid and energy homeostasis in the skeletal muscle via repression of genes involved in lipid metabolism and myogenesis including: CD36, FABP3, FABP4, UCP3, SCD1 and MSTN. Regulates hepatic lipid metabolism via the repression of APOC3. Represses gene expression at a distance in macrophages by inhibiting the transcription of enhancer-derived RNAs (eRNAs). In addition to its activity as a repressor, can also act as a transcriptional activator. Acts as a transcriptional activator of the sterol regulatory element-binding protein 1 (SREBF1) and the inflammatory mediator interleukin-6 (IL6) in the skeletal muscle. Plays a role in the regulation of circadian sleep/wake cycle; essential for maintaining wakefulness during the dark phase or active period. Key regulator of skeletal muscle mitochondrial function; negatively regulates the skeletal muscle expression of core clock genes and genes involved in mitochondrial biogenesis, fatty acid beta-oxidation and lipid metabolism. May play a role in the circadian control of neutrophilic inflammation in the lung. The chain is Nuclear receptor subfamily 1 group D member 2 from Rattus norvegicus (Rat).